The primary structure comprises 237 residues: rRNA-processing protein EFG1 (237 aa).

A disordered region spans residues 1–24; sequence MPKTVKNPKNNKSRSRGAPIQVAE. Coiled-coil stretches lie at residues 53-113 and 166-186; these read DKKI…ISQT and LKIT…LMEE. Positions 206 to 237 are disordered; the sequence is NDKTQKAVLTEEIDAPEQKQDEQQEEQDDFFE. Positions 228-237 are enriched in acidic residues; it reads QQEEQDDFFE.

The protein belongs to the EFG1 family.

It is found in the nucleus. Its subcellular location is the nucleolus. Its function is as follows. Involved in rRNA processing. The protein is rRNA-processing protein EFG1 of Candida albicans (strain SC5314 / ATCC MYA-2876) (Yeast).